Reading from the N-terminus, the 494-residue chain is Subtilisin-like serine protease EN45_078720 (494 aa).

A signal peptide spans 1-16 (MKGFLSLTLLPLLVAA). The propeptide at 17–136 (SPVAVNSIHN…IEKDSEVRTM (120 aa)) is removed in mature form. The Inhibitor I9 domain occupies 43–136 (SYIVVFKKHV…IEKDSEVRTM (94 aa)). Residues 146 to 448 (PWGLARISHR…GGSANYTKIL (303 aa)) form the Peptidase S8 domain. 2 igE-binding regions span residues 180-198 (VIDT…RANW) and 209-231 (EDGN…GVAK). Residues aspartate 182 and histidine 214 each act as charge relay system in the active site. Residues asparagine 244 and asparagine 280 are each glycosylated (N-linked (GlcNAc...) asparagine). The Charge relay system role is filled by serine 376. An N-linked (GlcNAc...) asparagine glycan is attached at asparagine 443. A propeptide spans 454 to 494 (KAHNAETTVEDRIGGIIDSAEKAFHKELGAIYSEIKDAVSA) (removed in mature form).

This sequence belongs to the peptidase S8 family.

Its function is as follows. Serine protease. This is Subtilisin-like serine protease EN45_078720 from Penicillium chrysogenum (Penicillium notatum).